Here is a 380-residue protein sequence, read N- to C-terminus: Cytochrome b (380 aa).

4 consecutive transmembrane segments (helical) span residues phenylalanine 33–methionine 53, tryptophan 77–valine 98, tryptophan 113–leucine 133, and phenylalanine 178–leucine 198. Histidine 83 and histidine 97 together coordinate heme b. 2 residues coordinate heme b: histidine 182 and histidine 196. Position 201 (histidine 201) interacts with a ubiquinone. Helical transmembrane passes span isoleucine 226–phenylalanine 246, leucine 288–histidine 308, isoleucine 320–glycine 340, and phenylalanine 347–proline 367.

The protein belongs to the cytochrome b family. In terms of assembly, the cytochrome bc1 complex contains 11 subunits: 3 respiratory subunits (MT-CYB, CYC1 and UQCRFS1), 2 core proteins (UQCRC1 and UQCRC2) and 6 low-molecular weight proteins (UQCRH/QCR6, UQCRB/QCR7, UQCRQ/QCR8, UQCR10/QCR9, UQCR11/QCR10 and a cleavage product of UQCRFS1). This cytochrome bc1 complex then forms a dimer. Heme b serves as cofactor.

The protein resides in the mitochondrion inner membrane. Component of the ubiquinol-cytochrome c reductase complex (complex III or cytochrome b-c1 complex) that is part of the mitochondrial respiratory chain. The b-c1 complex mediates electron transfer from ubiquinol to cytochrome c. Contributes to the generation of a proton gradient across the mitochondrial membrane that is then used for ATP synthesis. This Microtus oregoni (Creeping vole) protein is Cytochrome b (MT-CYB).